A 186-amino-acid chain; its full sequence is Probable RNA 2'-phosphotransferase (186 aa).

It belongs to the KptA/TPT1 family.

Functionally, removes the 2'-phosphate from RNA via an intermediate in which the phosphate is ADP-ribosylated by NAD followed by a presumed transesterification to release the RNA and generate ADP-ribose 1''-2''-cyclic phosphate (APPR&gt;P). May function as an ADP-ribosylase. This chain is Probable RNA 2'-phosphotransferase, found in Hahella chejuensis (strain KCTC 2396).